Consider the following 157-residue polypeptide: uncharacterized protein (157 aa).

Residues 1-11 are compositionally biased toward basic and acidic residues; that stretch reads MGDLEGQDRPD. The segment at 1–22 is disordered; that stretch reads MGDLEGQDRPDPISTMVGPSGT.

The protein localises to the mitochondrion. This is an uncharacterized protein from Arabidopsis thaliana (Mouse-ear cress).